A 200-amino-acid chain; its full sequence is Ras-related protein Rab-10 (200 aa).

GTP-binding residues include serine 18, glycine 19, valine 20, glycine 21, lysine 22, threonine 23, cysteine 24, asparagine 35, threonine 36, serine 40, and threonine 41. Residue threonine 23 coordinates Mg(2+). Short sequence motifs (switch) lie at residues 32–46 (DAFN…GIDF) and 64–81 (DTAG…YYRG). Residues threonine 41 and aspartate 64 each contribute to the Mg(2+) site. Glycine 67 contacts GTP. Position 73 is a phosphothreonine; by LRRK2 (threonine 73). Lysine 102 bears the N6-acetyllysine mark. Lysine 102 is covalently cross-linked (Glycyl lysine isopeptide (Lys-Gly) (interchain with G-Cter in ubiquitin)). 4 residues coordinate GTP: asparagine 122, lysine 123, aspartate 125, and methionine 126. Lysine 136 participates in a covalent cross-link: Glycyl lysine isopeptide (Lys-Gly) (interchain with G-Cter in ubiquitin). Serine 152, alanine 153, and lysine 154 together coordinate GTP. Residue lysine 154 forms a Glycyl lysine isopeptide (Lys-Gly) (interchain with G-Cter in ubiquitin) linkage. Residues cysteine 199 and cysteine 200 are each lipidated (S-geranylgeranyl cysteine).

Belongs to the small GTPase superfamily. Rab family. In terms of assembly, interacts with MYO5A; mediates the transport to the plasma membrane of SLC2A4/GLUT4 storage vesicles. Interacts with GDI1 and with GDI2; negatively regulates RAB10 association with membranes and activation. Interacts (GDP-bound form) with LLGL1; the interaction is direct and promotes RAB10 association with membranes and activation through competition with the Rab inhibitor GDI1. Interacts with EXOC4; probably associates with the exocyst. Interacts (GTP-bound form) with MICALCL, MICAL1, MICAL3, EHBP1 and EHBP1L1; at least in case of MICAL1 two molecules of RAB10 can bind to one molecule of MICAL1. Interacts with TBC1D13. Interacts with SEC16A. Interacts with CHM and CHML. Interacts with LRRK2; interaction facilitates phosphorylation of Thr-73. Interacts (when phosphorylated on Thr-73) with RILPL1 and RILPL2. Interacts with TBC1D21. Interacts with MARCKS. The cofactor is Mg(2+). Post-translationally, ubiquitinated upon Legionella pneumophila infection. Ubiquitination does not lead to proteasomal degradation. Phosphorylation of Thr-73 in the switch II region by LRRK2 prevents the association of dRAB regulatory proteins, including CHM, CHML and RAB GDP dissociation inhibitors GDI1 and GDI2. Phosphorylation of Thr-73 by LRRK2 is stimulated by RAB29 and RAB32. Phosphorylation by LRRK2 is required for localization to stressed lysosomes. As to expression, expressed in the hippocampus. Expressed in neutrophils (at protein level). Expressed in the testis (at protein level).

It localises to the cytoplasmic vesicle membrane. It is found in the golgi apparatus membrane. The protein localises to the golgi apparatus. Its subcellular location is the trans-Golgi network membrane. The protein resides in the endosome membrane. It localises to the recycling endosome membrane. It is found in the cytoplasmic vesicle. The protein localises to the phagosome membrane. Its subcellular location is the cytoplasm. The protein resides in the cytoskeleton. It localises to the cilium basal body. It is found in the endoplasmic reticulum membrane. The protein localises to the perinuclear region. Its subcellular location is the lysosome. The enzyme catalyses GTP + H2O = GDP + phosphate + H(+). Regulated by guanine nucleotide exchange factors (GEFs) DENND4C and RABIF which promote the exchange of bound GDP for free GTP. Regulated by GTPase activating proteins (GAPs) including TBC1D21 which increase the GTP hydrolysis activity. Inhibited by GDP dissociation inhibitors GDI1 and GDI2 which prevent Rab-GDP dissociation. In terms of biological role, the small GTPases Rab are key regulators of intracellular membrane trafficking, from the formation of transport vesicles to their fusion with membranes. Rabs cycle between an inactive GDP-bound form and an active GTP-bound form that is able to recruit to membranes different set of downstream effectors directly responsible for vesicle formation, movement, tethering and fusion. That Rab is mainly involved in the biosynthetic transport of proteins from the Golgi to the plasma membrane. Regulates, for instance, SLC2A4/GLUT4 glucose transporter-enriched vesicles delivery to the plasma membrane. In parallel, it regulates the transport of TLR4, a toll-like receptor to the plasma membrane and therefore may be important for innate immune response. Also plays a specific role in asymmetric protein transport to the plasma membrane. In neurons, it is involved in axonogenesis through regulation of vesicular membrane trafficking toward the axonal plasma membrane. In epithelial cells, it regulates transport from the Golgi to the basolateral membrane. May play a role in the basolateral recycling pathway and in phagosome maturation. May play a role in endoplasmic reticulum dynamics and morphology controlling tubulation along microtubules and tubules fusion. Together with LRRK2, RAB8A, and RILPL1, it regulates ciliogenesis. When phosphorylated by LRRK2 on Thr-73, binds RILPL1 and inhibits ciliogenesis. Participates in the export of a subset of neosynthesized proteins through a Rab8-Rab10-Rab11-dependent endososomal export route. Targeted to and stabilized on stressed lysosomes through LRRK2 phosphorylation where it promotes the extracellular release of lysosomal content through EHBP1 and EHNP1L1 effector proteins. (Microbial infection) Upon Legionella pneumophila infection promotes endoplasmic reticulum recruitment and bacterial replication. Plays a role in remodeling the Legionella-containing vacuole (LCV) into an endoplasmic reticulum-like vacuole. The chain is Ras-related protein Rab-10 from Homo sapiens (Human).